The primary structure comprises 804 residues: Probable cadmium-transporting ATPase (804 aa).

HMA domains lie at 11 to 74 (DKQV…LKVA) and 89 to 152 (DKNV…LKVI). Cysteine 22, cysteine 25, cysteine 100, and cysteine 103 together coordinate Cd(2+). Helical transmembrane passes span 183-203 (STLL…FVNG), 207-227 (LVTS…LFKV), 248-268 (IGAA…LFAI), 413-433 (IIMV…GGSW), and 441-461 (LAVL…ISIV). Aspartate 492 acts as the 4-aspartylphosphate intermediate in catalysis. The next 2 membrane-spanning stretches (helical) occupy residues 749-771 (LNII…LLVI) and 776-798 (TLWI…SLRL).

It belongs to the cation transport ATPase (P-type) (TC 3.A.3) family. Type IB subfamily.

Its subcellular location is the cell membrane. It carries out the reaction Cd(2+)(in) + ATP + H2O = Cd(2+)(out) + ADP + phosphate + H(+). Functionally, couples the hydrolysis of ATP with the export of cadmium. Involved in cadmium resistance. In Staphylococcus aureus, this protein is Probable cadmium-transporting ATPase (cadA).